The chain runs to 557 residues: Putative sensory transducer protein (557 aa).

Residues 122 to 145 (TASTVMIVVIFVGILIAIALGVFI) traverse the membrane as a helical segment. The region spanning 147–199 (RIISKPIGQMVEAADRLALGDVEVDVKAETRDEIGKLAESFKRMIENIREQAY) is the HAMP domain. One can recognise a Methyl-accepting transducer domain in the interval 243–472 (VAAQVAAGAK…ESAAASEELS (230 aa)). Gln-268 is subject to Glutamate methyl ester (Gln). Glu-274 is modified (glutamate methyl ester (Glu)). Position 281 is a glutamate methyl ester (Gln) (Gln-281). Glutamate methyl ester (Glu) is present on Glu-463. The span at 511-541 (DYTENKQPKSYSKEENGEYSDGKETAEKDVG) shows a compositional bias: basic and acidic residues. The interval 511–542 (DYTENKQPKSYSKEENGEYSDGKETAEKDVGG) is disordered.

This sequence belongs to the methyl-accepting chemotaxis (MCP) protein family.

It is found in the cell membrane. Its function is as follows. May bind attractants or detect changes in the extracellular concentration of soluble sugars. In Acetivibrio thermocellus (strain ATCC 27405 / DSM 1237 / JCM 9322 / NBRC 103400 / NCIMB 10682 / NRRL B-4536 / VPI 7372) (Clostridium thermocellum), this protein is Putative sensory transducer protein.